A 209-amino-acid chain; its full sequence is Uracil phosphoribosyltransferase (209 aa).

Residues Arg-79, Arg-104, and 131 to 139 each bind 5-phospho-alpha-D-ribose 1-diphosphate; that span reads DPMLATGGS. Residues Ile-194 and 199 to 201 contribute to the uracil site; that span reads GDA. Asp-200 serves as a coordination point for 5-phospho-alpha-D-ribose 1-diphosphate.

The protein belongs to the UPRTase family. The cofactor is Mg(2+).

The catalysed reaction is UMP + diphosphate = 5-phospho-alpha-D-ribose 1-diphosphate + uracil. Its pathway is pyrimidine metabolism; UMP biosynthesis via salvage pathway; UMP from uracil: step 1/1. With respect to regulation, allosterically activated by GTP. Its function is as follows. Catalyzes the conversion of uracil and 5-phospho-alpha-D-ribose 1-diphosphate (PRPP) to UMP and diphosphate. The polypeptide is Uracil phosphoribosyltransferase (Streptococcus equi subsp. zooepidemicus (strain MGCS10565)).